Consider the following 122-residue polypeptide: Large ribosomal subunit protein uL14 (122 aa).

The protein belongs to the universal ribosomal protein uL14 family. Part of the 50S ribosomal subunit. Forms a cluster with proteins L3 and L19. In the 70S ribosome, L14 and L19 interact and together make contacts with the 16S rRNA in bridges B5 and B8.

Functionally, binds to 23S rRNA. Forms part of two intersubunit bridges in the 70S ribosome. The sequence is that of Large ribosomal subunit protein uL14 from Thermotoga maritima (strain ATCC 43589 / DSM 3109 / JCM 10099 / NBRC 100826 / MSB8).